Consider the following 329-residue polypeptide: DNA-directed RNA polymerase subunit alpha (329 aa).

The interval 1–235 is alpha N-terminal domain (alpha-NTD); it reads MQGSVTEFLK…EQLDAFVDLR (235 aa). Residues 249–329 are alpha C-terminal domain (alpha-CTD); it reads FDPILLRPVD…NWPPASIAED (81 aa).

It belongs to the RNA polymerase alpha chain family. As to quaternary structure, homodimer. The RNAP catalytic core consists of 2 alpha, 1 beta, 1 beta' and 1 omega subunit. When a sigma factor is associated with the core the holoenzyme is formed, which can initiate transcription.

The enzyme catalyses RNA(n) + a ribonucleoside 5'-triphosphate = RNA(n+1) + diphosphate. Its function is as follows. DNA-dependent RNA polymerase catalyzes the transcription of DNA into RNA using the four ribonucleoside triphosphates as substrates. The chain is DNA-directed RNA polymerase subunit alpha from Pasteurella multocida (strain Pm70).